The primary structure comprises 113 residues: Transmembrane protein 256 (113 aa).

The N-terminal stretch at 1-29 (MAGPAAAFRRLGALSGAAALGFASYGAHG) is a signal peptide. Residues 30–63 (AQFPDAYGKELFDKANKHHFLHSLALLGVPHCRK) lie on the Extracellular side of the membrane. Residue Lys43 is modified to N6-acetyllysine. Residues 64–84 (PLWAGLLLASGTTLFCTSFYY) traverse the membrane as a helical segment. At 85 to 92 (QALSGDPS) the chain is on the cytoplasmic side. A helical transmembrane segment spans residues 93-113 (IQTLAPAGGTLLLLGWLALAL).

This sequence belongs to the TMEM256 family.

Its subcellular location is the membrane. The chain is Transmembrane protein 256 (TMEM256) from Homo sapiens (Human).